Consider the following 233-residue polypeptide: MSRYLEMLSLFGVAGAHPGGLAFSKAVLQKAAPSPDQPILDAGCGTGQTAAYLGHLLYPVTVVDKDPIMLEKAKKRFANEGLAIPAYQAELEHLPFSSESFSCVLSESVLSFSRLTSSLQEISRVLKPSGMLIGIEAALKKPMPPAEKKQMMDFYGFTCLHEESEWHKLLRSYGFQKTEAMSLLPEDMEFEPTTEMDLSQTIDPIYYDTLQTHYQLMQLYSEYMGHCIFIAYK.

It belongs to the methyltransferase superfamily.

This is an uncharacterized protein from Bacillus subtilis (strain 168).